We begin with the raw amino-acid sequence, 73 residues long: uncharacterized protein (73 aa).

The helical transmembrane segment at 37 to 57 (AIIITVAVVAFGALTLGAIGA) threads the bilayer.

The protein localises to the membrane. This is an uncharacterized protein from Natronomonas pharaonis (strain ATCC 35678 / DSM 2160 / CIP 103997 / JCM 8858 / NBRC 14720 / NCIMB 2260 / Gabara) (Halobacterium pharaonis).